The following is a 131-amino-acid chain: ATP synthase epsilon chain (131 aa).

Belongs to the ATPase epsilon chain family. As to quaternary structure, F-type ATPases have 2 components, CF(1) - the catalytic core - and CF(0) - the membrane proton channel. CF(1) has five subunits: alpha(3), beta(3), gamma(1), delta(1), epsilon(1). CF(0) has three main subunits: a, b and c.

The protein resides in the cell membrane. Produces ATP from ADP in the presence of a proton gradient across the membrane. The protein is ATP synthase epsilon chain of Bacillus pumilus (strain SAFR-032).